We begin with the raw amino-acid sequence, 428 residues long: Serine--tRNA ligase (428 aa).

237 to 239 (TAE) serves as a coordination point for L-serine. Residue 268–270 (RSE) participates in ATP binding. E291 is a binding site for L-serine. An ATP-binding site is contributed by 355-358 (EISS). Residue S390 coordinates L-serine.

The protein belongs to the class-II aminoacyl-tRNA synthetase family. Type-1 seryl-tRNA synthetase subfamily. As to quaternary structure, homodimer. The tRNA molecule binds across the dimer.

Its subcellular location is the cytoplasm. It catalyses the reaction tRNA(Ser) + L-serine + ATP = L-seryl-tRNA(Ser) + AMP + diphosphate + H(+). The catalysed reaction is tRNA(Sec) + L-serine + ATP = L-seryl-tRNA(Sec) + AMP + diphosphate + H(+). It participates in aminoacyl-tRNA biosynthesis; selenocysteinyl-tRNA(Sec) biosynthesis; L-seryl-tRNA(Sec) from L-serine and tRNA(Sec): step 1/1. Its function is as follows. Catalyzes the attachment of serine to tRNA(Ser). Is also able to aminoacylate tRNA(Sec) with serine, to form the misacylated tRNA L-seryl-tRNA(Sec), which will be further converted into selenocysteinyl-tRNA(Sec). The protein is Serine--tRNA ligase of Hydrogenovibrio crunogenus (strain DSM 25203 / XCL-2) (Thiomicrospira crunogena).